Reading from the N-terminus, the 109-residue chain is Mitochondrial pyruvate carrier 1 (109 aa).

An N-acetylalanine modification is found at alanine 2. Residues alanine 2–aspartate 20 are Mitochondrial matrix-facing. The chain crosses the membrane as a helical span at residues tyrosine 21–isoleucine 41. Topologically, residues asparagine 42 to serine 52 are mitochondrial intermembrane. A helical transmembrane segment spans residues glycine 53–tyrosine 71. Position 72 is an N6-acetyllysine (lysine 72). The Mitochondrial matrix segment spans residues lysine 72–alanine 109.

Belongs to the mitochondrial pyruvate carrier (MPC) (TC 2.A.105) family. Homodimer. Forms heterodimer with MPC2. The heterodimer is the more stable and dominant form.

It localises to the mitochondrion inner membrane. It catalyses the reaction pyruvate(out) + H(+)(out) = pyruvate(in) + H(+)(in). Functionally, mediates the uptake of pyruvate into mitochondria. The chain is Mitochondrial pyruvate carrier 1 (Mpc1) from Mus musculus (Mouse).